Reading from the N-terminus, the 451-residue chain is Phosphoglucosamine mutase (451 aa).

Residue serine 101 is the Phosphoserine intermediate of the active site. Positions 101, 240, 242, and 244 each coordinate Mg(2+). Phosphoserine is present on serine 101.

The protein belongs to the phosphohexose mutase family. Mg(2+) serves as cofactor. Post-translationally, activated by phosphorylation.

The catalysed reaction is alpha-D-glucosamine 1-phosphate = D-glucosamine 6-phosphate. Catalyzes the conversion of glucosamine-6-phosphate to glucosamine-1-phosphate. The polypeptide is Phosphoglucosamine mutase (Streptococcus pyogenes serotype M3 (strain SSI-1)).